The chain runs to 262 residues: Glutamate racemase (262 aa).

Substrate-binding positions include 5–6 and 37–38; these read DS and YG. Cysteine 69 functions as the Proton donor/acceptor in the catalytic mechanism. Residue 70 to 71 participates in substrate binding; it reads NT. Cysteine 181 functions as the Proton donor/acceptor in the catalytic mechanism. 182-183 is a substrate binding site; sequence TH.

This sequence belongs to the aspartate/glutamate racemases family.

It catalyses the reaction L-glutamate = D-glutamate. It participates in cell wall biogenesis; peptidoglycan biosynthesis. In terms of biological role, provides the (R)-glutamate required for cell wall biosynthesis. This chain is Glutamate racemase, found in Buchnera aphidicola subsp. Acyrthosiphon pisum (strain 5A).